A 400-amino-acid polypeptide reads, in one-letter code: Elongation factor Tu (400 aa).

The region spanning 10–209 (KPHVNIGTIG…AVDKYIPTPQ (200 aa)) is the tr-type G domain. The segment at 19–26 (GHVDHGKT) is G1. 19–26 (GHVDHGKT) provides a ligand contact to GTP. Thr26 serves as a coordination point for Mg(2+). The segment at 60 to 64 (GITIN) is G2. Residues 81–84 (DCPG) form a G3 region. Residues 81 to 85 (DCPGH) and 136 to 139 (NKVD) contribute to the GTP site. The G4 stretch occupies residues 136–139 (NKVD). Residues 174 to 176 (SAL) are G5.

The protein belongs to the TRAFAC class translation factor GTPase superfamily. Classic translation factor GTPase family. EF-Tu/EF-1A subfamily. Monomer.

The protein resides in the cytoplasm. The enzyme catalyses GTP + H2O = GDP + phosphate + H(+). GTP hydrolase that promotes the GTP-dependent binding of aminoacyl-tRNA to the A-site of ribosomes during protein biosynthesis. The protein is Elongation factor Tu of Caldicellulosiruptor bescii (strain ATCC BAA-1888 / DSM 6725 / KCTC 15123 / Z-1320) (Anaerocellum thermophilum).